The primary structure comprises 20 residues: Venom prothrombin activator notanarin-D (20 aa).

The region spanning 1–10 is the Gla domain; that stretch reads SNSLFEEVRP. Glu6 and Glu7 each carry 4-carboxyglutamate. Residues 11 to 20 form the Peptidase S1 domain; it reads IVNGMDCKLG.

Belongs to the peptidase S1 family. Snake venom subfamily. As to quaternary structure, heterodimer of a light chain and a heavy chain; disulfide-linked. Post-translationally, gamma-carboxyglutamate residues are formed by vitamin K dependent carboxylation. These residues are essential for the binding of calcium. As to expression, expressed by the venom gland.

The protein resides in the secreted. It catalyses the reaction Selective cleavage of Arg-|-Thr and then Arg-|-Ile bonds in prothrombin to form thrombin.. Its function is as follows. Snake prothrombin activator that attacks the hemostatic system of prey. This protein is functionally similar to blood coagulation factor Xa. In Notechis scutatus niger (Peninsula tiger snake), this protein is Venom prothrombin activator notanarin-D.